Reading from the N-terminus, the 369-residue chain is Anhydro-N-acetylmuramic acid kinase (369 aa).

Residue 12–19 (GTSLDGVD) coordinates ATP.

Belongs to the anhydro-N-acetylmuramic acid kinase family.

It carries out the reaction 1,6-anhydro-N-acetyl-beta-muramate + ATP + H2O = N-acetyl-D-muramate 6-phosphate + ADP + H(+). It functions in the pathway amino-sugar metabolism; 1,6-anhydro-N-acetylmuramate degradation. It participates in cell wall biogenesis; peptidoglycan recycling. In terms of biological role, catalyzes the specific phosphorylation of 1,6-anhydro-N-acetylmuramic acid (anhMurNAc) with the simultaneous cleavage of the 1,6-anhydro ring, generating MurNAc-6-P. Is required for the utilization of anhMurNAc either imported from the medium or derived from its own cell wall murein, and thus plays a role in cell wall recycling. The protein is Anhydro-N-acetylmuramic acid kinase of Escherichia coli O157:H7.